The sequence spans 196 residues: MTWQNDYSRDYEVENHMECQNRSDKYIWSPHDAYFYKGLSELIVDIDRLIYLSLEKIRKDFVFINLNTDSLTEFINRDNEWLSAVKGKQVVLIAARKSEALANYWYYNSNIRGVVYAGLSRDIRKELAYVINGRFLRKDIKKDKITDREMEIIRMTAQGMLPKSIARIENCSVKTVYTHRRNAEAKLYSKLYKLVQ.

Residues 138–196 (KDIKKDKITDREMEIIRMTAQGMLPKSIARIENCSVKTVYTHRRNAEAKLYSKLYKLVQ) form the HTH luxR-type domain. A DNA-binding region (H-T-H motif) is located at residues 162 to 181 (PKSIARIENCSVKTVYTHRR).

This sequence belongs to the EcpR/MatA family.

Its subcellular location is the cytoplasm. In terms of biological role, part of the ecpRABCDE operon, which encodes the E.coli common pilus (ECP). ECP is found in both commensal and pathogenic strains and plays a dual role in early-stage biofilm development and host cell recognition. Positively regulates the expression of the ecp operon by binding to two TTCCT boxes. This is HTH-type transcriptional regulator EcpR (ecpR) from Escherichia coli O157:H7.